The sequence spans 548 residues: MHIGKKNYPNLITSFRMNLKKIILNHDRFSHPERWKTNALLRFTFVYIKFLFDLMIIKNPLRMVGKTYRDAVTALNSLQSNYANIMAIRQTGDRKNTMTLLEMHEWSRRIGYSASDFNKLNIVHITGTKGKGSTAAFTSSILGQYKEQLPRIGLYTSPHLKSVRERIRINGEPISEEKFAKYFFEVWDRLDSTTSSLDKFPHMIPGSKPGYFKFLTLLSFHTFIQEDCKSCVYEVGVGGELDSTNIIEKPIVCGVTLLGIDHTFMLGDTIEEIAWNKGGIFKSGAPAFTVEKQPPQGLTILKERAEERKTTLTEVPSFKQLENVKLGIAGEFQKSNASLAVMLASEILHTSNILEEKIKCSSNASIPEKFIIGLQNTKWEGRCQVLEKGKNVWYIDGAHTKDSMVAASTWFRDTVRLSKRKKILLFNQQSRDANALVNNLYSSVSPEITFDDVIFTTNVTWKSGSYSADLVSMNTSQEDVEKLKVQESLVKNWNKIDDNRAKTHVTASIEEANELIETLYDEPADIFVTGSLHLVGGLLVVFDRIDVK.

130-133 is an ATP binding site; the sequence is GKGS. S157, E234, and H262 together coordinate Mg(2+). ATP-binding residues include R382 and D396.

This sequence belongs to the folylpolyglutamate synthase family. The cofactor is a monovalent cation.

It is found in the mitochondrion inner membrane. Its subcellular location is the mitochondrion matrix. The protein resides in the cytoplasm. The enzyme catalyses (6S)-5,6,7,8-tetrahydrofolyl-(gamma-L-Glu)(n) + L-glutamate + ATP = (6S)-5,6,7,8-tetrahydrofolyl-(gamma-L-Glu)(n+1) + ADP + phosphate + H(+). It functions in the pathway cofactor biosynthesis; tetrahydrofolylpolyglutamate biosynthesis. Functionally, catalyzes conversion of folates to polyglutamate derivatives allowing concentration of folate compounds in the cell and the intracellular retention of these cofactors, which are important substrates for most of the folate-dependent enzymes that are involved in one-carbon transfer reactions involved in purine, pyrimidine and amino acid synthesis. Required for methionine synthesis and maintenance of intact mitochondrial DNA. Involved in telomere maintenance. This Saccharomyces cerevisiae (strain FostersO) (Baker's yeast) protein is Folylpolyglutamate synthase.